A 299-amino-acid chain; its full sequence is ATP phosphoribosyltransferase (299 aa).

The protein belongs to the ATP phosphoribosyltransferase family. Long subfamily. Equilibrium between an active dimeric form, an inactive hexameric form and higher aggregates. Interconversion between the various forms is largely reversible and is influenced by the natural substrates and inhibitors of the enzyme. Mg(2+) serves as cofactor.

Its subcellular location is the cytoplasm. The enzyme catalyses 1-(5-phospho-beta-D-ribosyl)-ATP + diphosphate = 5-phospho-alpha-D-ribose 1-diphosphate + ATP. It functions in the pathway amino-acid biosynthesis; L-histidine biosynthesis; L-histidine from 5-phospho-alpha-D-ribose 1-diphosphate: step 1/9. Feedback inhibited by histidine. Its function is as follows. Catalyzes the condensation of ATP and 5-phosphoribose 1-diphosphate to form N'-(5'-phosphoribosyl)-ATP (PR-ATP). Has a crucial role in the pathway because the rate of histidine biosynthesis seems to be controlled primarily by regulation of HisG enzymatic activity. This chain is ATP phosphoribosyltransferase, found in Enterobacter sp. (strain 638).